The sequence spans 350 residues: MALDPAKQKAIDMALAQIEKQFGKGSIMRLGEQMSRLNVEVIPTGSVALDVALGVGGLPRGRITEIYGPESSGKTTVALHVIAEAQKMGGVAAFVDAEHALDPVYAQALGVDIDNLLVSQPDTGEQALEITETLVRSGAVDVVVVDSVAALVPKAEIEGEMGDSFVGLQARLMSQALRKLTGAISKSKAVVIFINQIREKVGVMFGNPETTPGGRALKFYSSVRLEVRKTETLKSGQEVVGSRTRVKVVKNKVAPPFKQAEFDILYGQGISKEGSLIDIGTELNPPVIVKSGAWYSYGDLRIGQGKDNARDWLRQHPEVAAEIEQKIKERLNVASLPVKYADEEAGDADV.

68 to 75 contacts ATP; the sequence is GPESSGKT.

This sequence belongs to the RecA family.

It localises to the cytoplasm. Its function is as follows. Can catalyze the hydrolysis of ATP in the presence of single-stranded DNA, the ATP-dependent uptake of single-stranded DNA by duplex DNA, and the ATP-dependent hybridization of homologous single-stranded DNAs. It interacts with LexA causing its activation and leading to its autocatalytic cleavage. The sequence is that of Protein RecA from Symbiobacterium thermophilum (strain DSM 24528 / JCM 14929 / IAM 14863 / T).